A 236-amino-acid chain; its full sequence is 5'-methylthioadenosine/S-adenosylhomocysteine nucleosidase (236 aa).

Residue E12 is the Proton acceptor of the active site. Substrate-binding positions include G78, I153, and 174-175 (ME). The active-site Proton donor is D198.

Belongs to the PNP/UDP phosphorylase family. MtnN subfamily.

It catalyses the reaction S-adenosyl-L-homocysteine + H2O = S-(5-deoxy-D-ribos-5-yl)-L-homocysteine + adenine. It carries out the reaction S-methyl-5'-thioadenosine + H2O = 5-(methylsulfanyl)-D-ribose + adenine. The enzyme catalyses 5'-deoxyadenosine + H2O = 5-deoxy-D-ribose + adenine. Its pathway is amino-acid biosynthesis; L-methionine biosynthesis via salvage pathway; S-methyl-5-thio-alpha-D-ribose 1-phosphate from S-methyl-5'-thioadenosine (hydrolase route): step 1/2. Its function is as follows. Catalyzes the irreversible cleavage of the glycosidic bond in both 5'-methylthioadenosine (MTA) and S-adenosylhomocysteine (SAH/AdoHcy) to adenine and the corresponding thioribose, 5'-methylthioribose and S-ribosylhomocysteine, respectively. Also cleaves 5'-deoxyadenosine, a toxic by-product of radical S-adenosylmethionine (SAM) enzymes, into 5-deoxyribose and adenine. The polypeptide is 5'-methylthioadenosine/S-adenosylhomocysteine nucleosidase (Shewanella sp. (strain MR-7)).